The following is a 505-amino-acid chain: MEQTEKSKVYAENGLLEKIKLCLSKKPLPSPTERKKFDHDFAISTSFHGIHNIVQNRSKIRRVLWLVVVLGSVSLVTWQIYIRLLNYFTWPTTTSIEVQYVEKMEFPAVTFCNLNRFQTDAVAKFGVIFFLWHIVSKVLHLQEITANSTGSREATDFAASHQNFSIVEFIRNKGFYLNNSTLLDCEFFGKPCSPKDFAHVFTEYGNCFTFNHGETLQAKRKVSVSGRGLSLLFNVNQEAFTDNPALGFVDAGIIFVIHSPKKVPQFDGLGLLSPVGMHARVTIRQVKTVHQEYPWGECNPNIKLQNFSSYSTSGCLKECKAQHIKKQCGCVPFLLPGYGIECDLQKYFSCVSPVLDHIEFKDLCTVGTHNSSCPVSCEEIEYPATISYSSFPSQKALKYLSKKLNQSRKYIRENLVKIEINYSDLNYKITQQQKAVSVSELLADLGGQLGLFCGASLITIIEIIEYLFTNFYWICIFFLLKISEMTQWTPPPQNHLGNKNRIEEC.

Residues 1-30 (MEQTEKSKVYAENGLLEKIKLCLSKKPLPS) form a binds the plasma membrane and stabilizes the channel in the closed state region. Residues 1-61 (MEQTEKSKVY…NIVQNRSKIR (61 aa)) are Cytoplasmic-facing. The helical transmembrane segment at 62–82 (RVLWLVVVLGSVSLVTWQIYI) threads the bilayer. Over 83–459 (RLLNYFTWPT…GLFCGASLIT (377 aa)) the chain is Extracellular. Disulfide bonds link Cys112–Cys207, Cys185–Cys192, Cys298–Cys377, Cys315–Cys373, Cys328–Cys350, and Cys330–Cys342. Residues Asn147, Asn163, Asn178, and Asn179 are each glycosylated (N-linked (GlcNAc...) asparagine). Asn306 carries an N-linked (GlcNAc...) asparagine glycan. Residues Asn370, Asn405, and Asn421 are each glycosylated (N-linked (GlcNAc...) asparagine). The short motif at 454–456 (GAS) is the GAS motif; ion selectivity filter element. A helical transmembrane segment spans residues 460–480 (IIEIIEYLFTNFYWICIFFLL). Over 481–505 (KISEMTQWTPPPQNHLGNKNRIEEC) the chain is Cytoplasmic.

Belongs to the amiloride-sensitive sodium channel (TC 1.A.6) family. ASIC5 subfamily. As to quaternary structure, forms homotrimeric channels. Detected in small intestine, duodenum and jejunum. Detected at very low levels in testis and rectum.

It localises to the apical cell membrane. It is found in the cell membrane. The catalysed reaction is Na(+)(in) = Na(+)(out). It carries out the reaction Li(+)(in) = Li(+)(out). It catalyses the reaction K(+)(in) = K(+)(out). The enzyme catalyses H(+)(in) = H(+)(out). Its activity is regulated as follows. Inhibited by the diuretic drug amiloride. In terms of biological role, forms bile acid-gated sodium channels and may play a role in bile acid-dependent absorption and secretion by epithelial cells of the bile ducts. Displays high selectivity for sodium ions but can also permit the permeation of other cations. The gating could be indirect and the consequence of alterations of the membrane environment of the channel by bile acids. As a sodium channel of type II unipolar brush cells of the vestibulocerebellum, controlling the electrical activity of these cells, could play a role in motor coordination and balance. The chain is Bile acid-sensitive ion channel from Homo sapiens (Human).